The primary structure comprises 154 residues: Prefoldin subunit 5 (154 aa).

The residue at position 2 (A2) is an N-acetylalanine. K42 is subject to N6-acetyllysine. S56 bears the Phosphoserine mark.

The protein belongs to the prefoldin subunit alpha family. In terms of assembly, heterohexamer of two PFD-alpha type and four PFD-beta type subunits.

It localises to the nucleus. Its function is as follows. Binds specifically to cytosolic chaperonin (c-CPN) and transfers target proteins to it. Binds to nascent polypeptide chain and promotes folding in an environment in which there are many competing pathways for nonnative proteins. Represses the transcriptional activity of MYC. The chain is Prefoldin subunit 5 (PFDN5) from Pongo abelii (Sumatran orangutan).